A 233-amino-acid polypeptide reads, in one-letter code: LexA repressor (233 aa).

Residues 26-46 constitute a DNA-binding region (H-T-H motif); that stretch reads FDEMKDALDLRSKSGIHRLIT. Residues S154 and K192 each act as for autocatalytic cleavage activity in the active site.

It belongs to the peptidase S24 family. Homodimer.

The enzyme catalyses Hydrolysis of Ala-|-Gly bond in repressor LexA.. In terms of biological role, represses a number of genes involved in the response to DNA damage (SOS response), including recA and lexA. In the presence of single-stranded DNA, RecA interacts with LexA causing an autocatalytic cleavage which disrupts the DNA-binding part of LexA, leading to derepression of the SOS regulon and eventually DNA repair. This is LexA repressor from Nitrobacter winogradskyi (strain ATCC 25391 / DSM 10237 / CIP 104748 / NCIMB 11846 / Nb-255).